We begin with the raw amino-acid sequence, 109 residues long: uncharacterized protein (109 aa).

This is an uncharacterized protein from Mycoplasma genitalium (strain ATCC 33530 / DSM 19775 / NCTC 10195 / G37) (Mycoplasmoides genitalium).